The primary structure comprises 101 residues: Rho GTPase-activating protein 39 (101 aa).

The 96-residue stretch at 1-96 (YEQCIAHYES…VLIQHLDTSF (96 aa)) folds into the Rho-GAP domain.

As to expression, preoptic area and testis.

The chain is Rho GTPase-activating protein 39 (Arhgap39) from Rattus norvegicus (Rat).